The chain runs to 264 residues: 3-methyl-2-oxobutanoate hydroxymethyltransferase (264 aa).

Residues D45 and D84 each contribute to the Mg(2+) site. 3-methyl-2-oxobutanoate contacts are provided by residues 45-46 (DS), D84, and K112. E114 serves as a coordination point for Mg(2+). The active-site Proton acceptor is E181.

The protein belongs to the PanB family. Homodecamer; pentamer of dimers. It depends on Mg(2+) as a cofactor.

The protein resides in the cytoplasm. The enzyme catalyses 3-methyl-2-oxobutanoate + (6R)-5,10-methylene-5,6,7,8-tetrahydrofolate + H2O = 2-dehydropantoate + (6S)-5,6,7,8-tetrahydrofolate. The protein operates within cofactor biosynthesis; (R)-pantothenate biosynthesis; (R)-pantoate from 3-methyl-2-oxobutanoate: step 1/2. Its function is as follows. Catalyzes the reversible reaction in which hydroxymethyl group from 5,10-methylenetetrahydrofolate is transferred onto alpha-ketoisovalerate to form ketopantoate. The chain is 3-methyl-2-oxobutanoate hydroxymethyltransferase from Escherichia coli (strain K12 / MC4100 / BW2952).